Here is an 871-residue protein sequence, read N- to C-terminus: DNA mismatch repair protein MutS (871 aa).

An ATP-binding site is contributed by 630–637 (GPNMGGKS). The segment at 830-849 (KEEPESKSASPVEAALAGIN) is disordered.

This sequence belongs to the DNA mismatch repair MutS family.

In terms of biological role, this protein is involved in the repair of mismatches in DNA. It is possible that it carries out the mismatch recognition step. This protein has a weak ATPase activity. The protein is DNA mismatch repair protein MutS of Verminephrobacter eiseniae (strain EF01-2).